The following is a 353-amino-acid chain: O-antigen biosynthesis glycosyltransferase WclY (353 aa).

Residues 116 to 136 form a helical membrane-spanning segment; sequence SLIGGLLWCSIWLFFDKLVIL. UDP contacts are provided by Asn-190 and Glu-271. Residues 263 to 271 carry the E(x7)E motif; the sequence is EGFGLTVLE.

It belongs to the glycosyltransferase group 1 family. Glycosyltransferase 4 subfamily.

It is found in the membrane. It participates in bacterial outer membrane biogenesis; LPS O-antigen biosynthesis. With respect to regulation, activated by 5mM MnCl(2) and MgCl(2). No significant effect on activity by 5 mM ethylenediaminetetraacetic acid (EDTA), 0.125-0.5% Triton X-100 or dithiothreitol (DTT). Inhibited by 5 mM Zn-acetate. Functionally, involved in the assembly of the O-repeating unit during O-antigen biosynthesis. Glucosyltransferase accountable for the alpha-D-Glc-1,4-beta-D-Gal linkage within the O-antigen. Transfers alpha-1,4-Glc to the Gal moiety of a specific Gal-beta1-3GalNAc-alpha-OPO3-PO3-phenoxyundecyl (Gal-beta1-3GalNAc-PP-PhU) synthetic natural acceptor substrate analog. Requires both Gal-beta1-3GalNAc-alpha and the diphosphate moiety in the acceptor. Not active with GalNAc-PP-PhU, GlcNAc-PP-PhU, Gal-beta1-3GalNAc-alpha-O-benzyl, D-Rha-alpha1-3GlcNAc-alpha-PP-PhU or D-Man-alpha1-3Man-alpha-5-benzamidopentyl (BAP), nor with glycopeptides TTTVTP (Gal-beta1-3GalNAc-alpha-)TPTG or TT (Gal-beta1-3GalNAc-alpha-)TVTPTPTG as acceptor substrates. Has a broad nucleotide sugar donor substrate specificity with ADP-Glc, TDP-Glc and UDP-Glc as superior donors. Gal, GlcNAc, and GalNAc residues are transferred from UDP-sugars, but with low activity. UDP-Xyl, UDP-GlcA, GDP-Fuc or GDP-K-Rha do not act as donors. The chain is O-antigen biosynthesis glycosyltransferase WclY from Escherichia coli.